The chain runs to 448 residues: Probable glycine dehydrogenase (decarboxylating) subunit 1 (448 aa).

Belongs to the GcvP family. N-terminal subunit subfamily. The glycine cleavage system is composed of four proteins: P, T, L and H. In this organism, the P 'protein' is a heterodimer of two subunits.

The catalysed reaction is N(6)-[(R)-lipoyl]-L-lysyl-[glycine-cleavage complex H protein] + glycine + H(+) = N(6)-[(R)-S(8)-aminomethyldihydrolipoyl]-L-lysyl-[glycine-cleavage complex H protein] + CO2. Functionally, the glycine cleavage system catalyzes the degradation of glycine. The P protein binds the alpha-amino group of glycine through its pyridoxal phosphate cofactor; CO(2) is released and the remaining methylamine moiety is then transferred to the lipoamide cofactor of the H protein. The sequence is that of Probable glycine dehydrogenase (decarboxylating) subunit 1 from Listeria welshimeri serovar 6b (strain ATCC 35897 / DSM 20650 / CCUG 15529 / CIP 8149 / NCTC 11857 / SLCC 5334 / V8).